The primary structure comprises 192 residues: UPF0301 protein Bamb_0737 (192 aa).

It belongs to the UPF0301 (AlgH) family.

The sequence is that of UPF0301 protein Bamb_0737 from Burkholderia ambifaria (strain ATCC BAA-244 / DSM 16087 / CCUG 44356 / LMG 19182 / AMMD) (Burkholderia cepacia (strain AMMD)).